The primary structure comprises 336 residues: Thiamine thiazole synthase (336 aa).

Substrate contacts are provided by residues alanine 89, 110–111 (ES), glycine 118, and cysteine 183. The residue at position 219 (cysteine 219) is a 2,3-didehydroalanine (Cys). Substrate contacts are provided by residues aspartate 221, histidine 236, methionine 288, and 298–300 (RMG).

It belongs to the THI4 family. Homooctamer. Requires Fe cation as cofactor. In terms of processing, during the catalytic reaction, a sulfide is transferred from Cys-219 to a reaction intermediate, generating a dehydroalanine residue.

It is found in the cytoplasm. The protein resides in the nucleus. The catalysed reaction is [ADP-thiazole synthase]-L-cysteine + glycine + NAD(+) = [ADP-thiazole synthase]-dehydroalanine + ADP-5-ethyl-4-methylthiazole-2-carboxylate + nicotinamide + 3 H2O + 2 H(+). In terms of biological role, involved in biosynthesis of the thiamine precursor thiazole. Catalyzes the conversion of NAD and glycine to adenosine diphosphate 5-(2-hydroxyethyl)-4-methylthiazole-2-carboxylic acid (ADT), an adenylated thiazole intermediate. The reaction includes an iron-dependent sulfide transfer from a conserved cysteine residue of the protein to a thiazole intermediate. The enzyme can only undergo a single turnover, which suggests it is a suicide enzyme. May have additional roles in adaptation to various stress conditions and in DNA damage tolerance. The protein is Thiamine thiazole synthase of Puccinia graminis f. sp. tritici (strain CRL 75-36-700-3 / race SCCL) (Black stem rust fungus).